The following is a 239-amino-acid chain: Probable transcriptional regulatory protein BCG9842_B4761 (239 aa).

It belongs to the TACO1 family. YeeN subfamily.

Its subcellular location is the cytoplasm. The chain is Probable transcriptional regulatory protein BCG9842_B4761 from Bacillus cereus (strain G9842).